Here is a 220-residue protein sequence, read N- to C-terminus: MSIKEWPEDERPREKLLRQGPATLSDAELLAIFLRTGVNGLSAVDLSRQLLQQFGSLRALLGADQGAFCHAHGLGPAKYAQLQAVLEMGKRHLAEQLQRGDALTSPQLTRDYLQAQLREVFALLLLDNQHRVIQFVELFYGTLDSASVWPREIVQIALKHNAAAVILAHNHPSGVAEPSRADRQITDRILAALALIDIRVLDHLVIGDGITVSFAERGWL.

The region spanning 95–220 (EQLQRGDALT…TVSFAERGWL (126 aa)) is the MPN domain. Residues His169, His171, and Asp182 each contribute to the Zn(2+) site. The JAMM motif signature appears at 169-182 (HNHPSGVAEPSRAD).

It belongs to the UPF0758 family.

The chain is UPF0758 protein ASA_4229 from Aeromonas salmonicida (strain A449).